A 475-amino-acid chain; its full sequence is Putative UDP-glucose glucosyltransferase (475 aa).

It belongs to the UDP-glycosyltransferase family.

This Fragaria ananassa (Strawberry) protein is Putative UDP-glucose glucosyltransferase.